The chain runs to 827 residues: Stage II sporulation protein E (827 aa).

A run of 10 helical transmembrane segments spans residues 49–69 (IGFLLGRAFILSEVLPFALPF), 71–91 (GAMLLIRRDKAFYAVLAVLAG), 116–136 (VAAFITDDRVKALPIVVFFSM), 142–162 (GFVYAQNGVFTTYDYVMAIVE), 175–195 (QSLPIFTVKKVKQSLKIEEII), 206–226 (TGLAGLSYQGMQAEHILARYV), 247–267 (GLILGLANIGNLYQMSLLAFS), 269–289 (LLGGLLKEGKKAGAAIGLIVG), 299–319 (GSAGLMTTLYESLIAVCLFLL), and 320–340 (TPQSITRKVARYIPGTVEHLQ). Topologically, residues 341-827 (EQQQYARKIR…AIFQNKQEIS (487 aa)) are cytoplasmic. In terms of domain architecture, PPM-type phosphatase spans 594–804 (STGAAHAAKG…DDMTVVVVRI (211 aa)).

Requires Mn(2+) as cofactor.

The protein localises to the cell membrane. The catalysed reaction is O-phospho-L-seryl-[protein] + H2O = L-seryl-[protein] + phosphate. It catalyses the reaction O-phospho-L-threonyl-[protein] + H2O = L-threonyl-[protein] + phosphate. Functionally, normally needed for pro-sigma E processing during sporulation but can be bypassed in vegetative cells. Activates SpoIIAA by dephosphorylation. The chain is Stage II sporulation protein E (spoIIE) from Bacillus subtilis (strain 168).